Reading from the N-terminus, the 228-residue chain is MVSFSYLLLACSAIGALAAPVEPETTSFNETALHEFAERAGTPSSTGWNNGYYYSFWTDGGGDVTYTNGAGGSYSVNWRNVGNFVGGKGWNPGSARTINYGGSFNPSGNGYLAVYGWTTNPLIEYYVVESYGTYNPGSGGTFRGTVNTDGGTYNIYTAVRYNAPSIEGTKTFTQYWSVRTSKRTGGTVTMANHFNAWSRLGMNLGTHNYQIVATEGYQSSGSASITVY.

A signal peptide spans 1–18; that stretch reads MVSFSYLLLACSAIGALA. Asn29 carries an N-linked (GlcNAc...) asparagine glycan. The 189-residue stretch at 40-228 folds into the GH11 domain; the sequence is AGTPSSTGWN…SSGSASITVY (189 aa). Glu124 (nucleophile) is an active-site residue. Glu215 (proton donor) is an active-site residue.

Belongs to the glycosyl hydrolase 11 (cellulase G) family.

It localises to the secreted. It carries out the reaction Endohydrolysis of (1-&gt;4)-beta-D-xylosidic linkages in xylans.. It functions in the pathway glycan degradation; xylan degradation. In terms of biological role, endo-1,4-beta-xylanase involved in the hydrolysis of xylan, a major structural heterogeneous polysaccharide found in plant biomass representing the second most abundant polysaccharide in the biosphere, after cellulose. The sequence is that of Probable endo-1,4-beta-xylanase A (xlnA) from Aspergillus fumigatus (strain CBS 144.89 / FGSC A1163 / CEA10) (Neosartorya fumigata).